The primary structure comprises 478 residues: BUB3-interacting and GLEBS motif-containing protein ZNF207 (478 aa).

Residues 1 to 92 (MGRKKKKQLK…EGIPEKDMDE (92 aa)) are microtubule-binding region. 2 C2H2-type zinc fingers span residues 11 to 34 (PWCW…KAKH) and 35 to 58 (FKCH…MQVH). Residues 99 to 111 (QKTQESQKKKQQD) show a composition bias toward basic and acidic residues. Disordered stretches follow at residues 99–157 (QKTQ…PGMP), 238–276 (APTA…SNSE), 300–362 (VGTD…ATSK), and 384–478 (RNLP…GGRY). Positions 112 to 121 (DSDEYDDDDS) are enriched in acidic residues. Residues 127 to 136 (FQPQPVQPQQ) show a composition bias toward polar residues. Positions 142–157 (MAQPGLPPVPGAPGMP) are enriched in pro residues. 3 stretches are compositionally biased toward low complexity: residues 267 to 276 (SSSTASSNSE), 310 to 362 (TPAT…ATSK), and 433 to 446 (QGMP…MPPY). The interval 359–391 (ATSKLIHPDEDISLEERRAQLPKYQRNLPRPGQ) is GLEBS. Pro residues predominate over residues 447–467 (GQGPPMVPPYQGGPPRPPMGM).

In terms of assembly, interacts (via GLEBS region) with BUB3. In terms of tissue distribution, ubiquitous.

It localises to the nucleus. The protein localises to the chromosome. The protein resides in the centromere. Its subcellular location is the kinetochore. It is found in the cytoplasm. It localises to the cytoskeleton. The protein localises to the spindle. Kinetochore- and microtubule-binding protein that plays a key role in spindle assembly. ZNF207/BuGZ is mainly composed of disordered low-complexity regions and undergoes phase transition or coacervation to form temperature-dependent liquid droplets. Coacervation promotes microtubule bundling and concentrates tubulin, promoting microtubule polymerization and assembly of spindle and spindle matrix by concentrating its building blocks. Also acts as a regulator of mitotic chromosome alignment by mediating the stability and kinetochore loading of BUB3. Mechanisms by which BUB3 is protected are unclear: according to a first report, ZNF207/BuGZ may act by blocking ubiquitination and proteasomal degradation of BUB3. According to another report, the stabilization is independent of the proteasome. This is BUB3-interacting and GLEBS motif-containing protein ZNF207 from Homo sapiens (Human).